We begin with the raw amino-acid sequence, 124 residues long: Small ribosomal subunit protein uS12 (124 aa).

Aspartate 89 carries the 3-methylthioaspartic acid modification.

The protein belongs to the universal ribosomal protein uS12 family. As to quaternary structure, part of the 30S ribosomal subunit. Contacts proteins S8 and S17. May interact with IF1 in the 30S initiation complex.

Its function is as follows. With S4 and S5 plays an important role in translational accuracy. Functionally, interacts with and stabilizes bases of the 16S rRNA that are involved in tRNA selection in the A site and with the mRNA backbone. Located at the interface of the 30S and 50S subunits, it traverses the body of the 30S subunit contacting proteins on the other side and probably holding the rRNA structure together. The combined cluster of proteins S8, S12 and S17 appears to hold together the shoulder and platform of the 30S subunit. The chain is Small ribosomal subunit protein uS12 from Blochmanniella floridana.